We begin with the raw amino-acid sequence, 194 residues long: Fe/S biogenesis protein NfuA (194 aa).

Residues cysteine 152 and cysteine 155 each coordinate [4Fe-4S] cluster.

The protein belongs to the NfuA family. Homodimer. The cofactor is [4Fe-4S] cluster.

Its function is as follows. Involved in iron-sulfur cluster biogenesis. Binds a 4Fe-4S cluster, can transfer this cluster to apoproteins, and thereby intervenes in the maturation of Fe/S proteins. Could also act as a scaffold/chaperone for damaged Fe/S proteins. The protein is Fe/S biogenesis protein NfuA of Pseudomonas fluorescens (strain SBW25).